The following is a 119-amino-acid chain: Holo-[acyl-carrier-protein] synthase (119 aa).

Residues aspartate 5 and glutamate 51 each contribute to the Mg(2+) site.

It belongs to the P-Pant transferase superfamily. AcpS family. The cofactor is Mg(2+).

It is found in the cytoplasm. It carries out the reaction apo-[ACP] + CoA = holo-[ACP] + adenosine 3',5'-bisphosphate + H(+). Functionally, transfers the 4'-phosphopantetheine moiety from coenzyme A to a Ser of acyl-carrier-protein. The sequence is that of Holo-[acyl-carrier-protein] synthase from Helicobacter pylori (strain HPAG1).